A 637-amino-acid polypeptide reads, in one-letter code: Chaperone protein HtpG (637 aa).

The segment at 1 to 345 (MSQQETHGFQ…SNDLPLNVSR (345 aa)) is a; substrate-binding. A b region spans residues 346–562 (EILQDNHITK…EGEMSSQMIK (217 aa)). The tract at residues 563-637 (LMQAAGQPVP…MNQMLLANLK (75 aa)) is c.

Belongs to the heat shock protein 90 family. In terms of assembly, homodimer.

The protein resides in the cytoplasm. Functionally, molecular chaperone. Has ATPase activity. This Shewanella sp. (strain ANA-3) protein is Chaperone protein HtpG.